Consider the following 712-residue polypeptide: Dipeptidyl-peptidase 7 (712 aa).

An N-terminal signal peptide occupies residues 1-23 (MQMKLKSILLGAALLLGASGVAK). His89 serves as the catalytic Charge relay system. Residues 136 to 173 (TDKVEGQLKGITDEMERLRKAQEVCQELAKKENADENQ) adopt a coiled-coil conformation. Catalysis depends on charge relay system residues Asp225 and Ser648.

The protein belongs to the peptidase S46 family.

It localises to the cell outer membrane. Its activity is regulated as follows. Is inhibited in vitro by typical serine protease inhibitors like diisopropyl fluorophosphate, Pefablock, and 3,4-dichloroisocoumarin, but not by typical cysteine class inhibitors such as E-64 or iododoacetic acid. Its function is as follows. Catalyzes the removal of dipeptides from the N-terminus of oligopeptides. Shows a broad specificity for both aliphatic and aromatic residues in the P1 position, with glycine or proline being not acceptable in this position. Most potently cleaves the synthetic substrate Met-Leu-methylcoumaryl-7-amide (Met-Leu-MCA), Leu-Arg-MCA and Lys-Ala-MCA to a lesser extent. Is likely involved in amino acid metabolism and bacterial growth of asaccharolytic P.gingivalis, that utilizes amino acids from extracellular proteinaceous nutrients as energy and carbon sources. This Porphyromonas gingivalis (strain ATCC 33277 / DSM 20709 / CIP 103683 / JCM 12257 / NCTC 11834 / 2561) protein is Dipeptidyl-peptidase 7.